We begin with the raw amino-acid sequence, 223 residues long: Membrane protein (223 aa).

Over 1-18 (MAENCTLDSEQAVLLFKE) the chain is Virion surface. Residues 19–39 (YNLFITAFLLFLTILLQYGYA) form a helical membrane-spanning segment. At 40-49 (TRSRTIYILK) the chain is on the intravirion side. The chain crosses the membrane as a helical span at residues 50 to 70 (MIVLWCFWPLNIAVGVISCIY). Topologically, residues 71–75 (PPNTG) are virion surface. The chain crosses the membrane as a helical span at residues 76-96 (GLVAAIILTVFACLSFVGYWI). At 97–223 (QSCRLFKRCR…VATGGSSLYT (127 aa)) the chain is on the intravirion side.

Belongs to the gammacoronaviruses M protein family. In terms of assembly, homomultimer. Interacts with envelope E protein in the budding compartment of the host cell, which is located between endoplasmic reticulum and the Golgi complex. Forms a complex with HE and S proteins. Interacts with nucleocapsid N protein. This interaction probably participates in RNA packaging into the virus.

It is found in the virion membrane. It localises to the host Golgi apparatus membrane. Component of the viral envelope that plays a central role in virus morphogenesis and assembly via its interactions with other viral proteins. This chain is Membrane protein, found in Gallus gallus (Chicken).